Reading from the N-terminus, the 72-residue chain is UPF0337 protein bsl2407 (72 aa).

Positions M1–A55 are disordered. Residues E35–Q47 show a composition bias toward low complexity.

Belongs to the UPF0337 (CsbD) family.

The chain is UPF0337 protein bsl2407 from Bradyrhizobium diazoefficiens (strain JCM 10833 / BCRC 13528 / IAM 13628 / NBRC 14792 / USDA 110).